A 242-amino-acid chain; its full sequence is Probable transcriptional regulatory protein Cphy_2507 (242 aa).

Belongs to the TACO1 family.

Its subcellular location is the cytoplasm. In Lachnoclostridium phytofermentans (strain ATCC 700394 / DSM 18823 / ISDg) (Clostridium phytofermentans), this protein is Probable transcriptional regulatory protein Cphy_2507.